The chain runs to 260 residues: MLEKVKNIIVVLSGKGGVGKSTVSTQLSLALRKNGFKVGLLDIDLCGPSVPYLLGLEGRDIFQCDEGWVPVYTDESQTLAVMSIGFLLKNREDPVIWRGPKKTMMIRQFLTDVRWDELDYLIIDTPPGTSDEHITVMECLKEVGCHGAIIVTTPQEVALDDVRKEITFCKKTGINILGIVENMSGFVCPHCTSCTNIFSSNGGASLATYAQVPHLGTLPIDPRVGVLAGSTTSVLDELPDSTTAEVLTHIVEKLKTISVS.

An ATP-binding site is contributed by 14 to 21; that stretch reads GKGGVGKS. Residues Cys-188 and Cys-191 each coordinate [4Fe-4S] cluster.

This sequence belongs to the Mrp/NBP35 ATP-binding proteins family. NUBP2/CFD1 subfamily. As to quaternary structure, heterotetramer of 2 Nubp1 and 2 Nubp2 chains. The cofactor is [4Fe-4S] cluster.

The protein resides in the cytoplasm. In terms of biological role, component of the cytosolic iron-sulfur (Fe/S) protein assembly (CIA) machinery. Required for maturation of extramitochondrial Fe-S proteins. The Nubp1-Nubp2 heterotetramer forms a Fe-S scaffold complex, mediating the de novo assembly of an Fe-S cluster and its transfer to target apoproteins. The chain is Cytosolic Fe-S cluster assembly factor Nubp2 homolog from Drosophila erecta (Fruit fly).